The chain runs to 421 residues: Functional amyloid transporter FapF (421 aa).

A signal peptide spans Met-1–Ala-24. Residues Gln-23–Gln-64 are a coiled coil.

It belongs to the amyloid transporter (TC 9.B.153) family.

The protein localises to the secreted. It localises to the cell surface. The protein resides in the cell outer membrane. In terms of biological role, transports fibril components across the outer membrane. Upon overexpression of the endogenous six-gene locus (fapA-fapF), cells form large clumps during liquid growth, make large amounts of biofilm and produce amyloid fibrils. The chain is Functional amyloid transporter FapF from Pseudomonas aeruginosa (strain ATCC 15692 / DSM 22644 / CIP 104116 / JCM 14847 / LMG 12228 / 1C / PRS 101 / PAO1).